The following is a 478-amino-acid chain: MAFPYQCLVARSESSADGAAWTLFGASGSKIVVQSSNGVASVWSRQAVQVLDPKDDDTQEPPGKRIKLSTPKEQKFNFSSLVLSNNGHYLVGVTGEDKCVRVFQIDAQSGLQQLSERCMSRRPSAITLTSDDSTILCADKFGDVYALPLLPSPEDEQVEAPAPALPLEEKDFTPSATVFTVHSGRNRRTLEEQLKQKAKGPAKPKEAITFRHDLLLGHVSMLTDLAFAKIGNKSYIITADRDEHIRISRGVPQAHIIEGFCFGHEEFVSRLCVTRSGLLVSGGGDAHLLVWDWRNFLLNEKLPLRDTVIKHLRSRPDLSSSFKDDASFKTAVSGIWEVPGIKETSEVLVACEGLPGLFNFNVGTGAVNGDSLSLMGNPLDVAFVQTSPNSWTTIVSIDNVHKAGSTSELRENADGARLQYFSKQVDGAWREDAEMGALVSSFALGGTDGPDLTTADDKAVRDILYHVENLRKRPGAED.

WD repeat units lie at residues 14–53, 73–113, 217–258, and 263–301; these read SSAD…VLDP, EQKF…GLQQ, GHVS…HIIE, and GHEE…LNEK.

Belongs to the WD repeat TRM82 family. Forms a heterodimer with the catalytic subunit TRM8.

It is found in the nucleus. It functions in the pathway tRNA modification; N(7)-methylguanine-tRNA biosynthesis. Functionally, required for the formation of N(7)-methylguanine at position 46 (m7G46) in tRNA. In the complex, it is required to stabilize and induce conformational changes of the catalytic subunit. In Phaeosphaeria nodorum (strain SN15 / ATCC MYA-4574 / FGSC 10173) (Glume blotch fungus), this protein is tRNA (guanine-N(7)-)-methyltransferase non-catalytic subunit TRM82.